A 133-amino-acid chain; its full sequence is Ribosome-binding factor A (133 aa).

This sequence belongs to the RbfA family. In terms of assembly, monomer. Binds 30S ribosomal subunits, but not 50S ribosomal subunits or 70S ribosomes.

It localises to the cytoplasm. One of several proteins that assist in the late maturation steps of the functional core of the 30S ribosomal subunit. Associates with free 30S ribosomal subunits (but not with 30S subunits that are part of 70S ribosomes or polysomes). Required for efficient processing of 16S rRNA. May interact with the 5'-terminal helix region of 16S rRNA. This Cytophaga hutchinsonii (strain ATCC 33406 / DSM 1761 / CIP 103989 / NBRC 15051 / NCIMB 9469 / D465) protein is Ribosome-binding factor A.